Reading from the N-terminus, the 138-residue chain is MPPKAAEKKPSTAGKAPAGKAPEKKEAGKKTTAAGGEKKKRSKTRKETYSSYIYKVLKQVHPDTGISNRAMSILNSFVNDIFERVATEASKLAAYNKKSTISSREIQTSVRLILPGELAKHAVSEGTKAVTKYSSSAK.

Basic and acidic residues predominate over residues 1 to 10; sequence MPPKAAEKKP. The tract at residues 1–47 is disordered; that stretch reads MPPKAAEKKPSTAGKAPAGKAPEKKEAGKKTTAAGGEKKKRSKTRKE. Lys8 and Lys9 each carry N6-acetyllysine; alternate. Residues Lys8 and Lys9 each participate in a glycyl lysine isopeptide (Lys-Gly) (interchain with G-Cter in SUMO); alternate cross-link. Low complexity predominate over residues 11-20; that stretch reads STAGKAPAGK. N6-acetyllysine is present on Lys15. The residue at position 24 (Lys24) is an N6-acetyllysine; alternate. A Glycyl lysine isopeptide (Lys-Gly) (interchain with G-Cter in SUMO); alternate cross-link involves residue Lys24. Lys25 is covalently cross-linked (Glycyl lysine isopeptide (Lys-Gly) (interchain with G-Cter in SUMO)). Residue Lys132 forms a Glycyl lysine isopeptide (Lys-Gly) (interchain with G-Cter in ubiquitin) linkage.

It belongs to the histone H2B family. In terms of assembly, the nucleosome is a histone octamer containing two molecules each of H2A, H2B, H3 and H4 assembled in one H3-H4 heterotetramer and two H2A-H2B heterodimers. The octamer wraps approximately 147 bp of DNA. In terms of processing, monoubiquitinated to form H2BK123ub1. H2BK123ub1 gives a specific tag for epigenetic transcriptional activation and is also prerequisite for H3K4me and H3K79me formation. H2BK123ub1 also modulates the formation of double-strand breaks during meiosis and is a prerequisite for DNA-damage checkpoint activation. Acetylated by GCN5 to form H2BK11ac and H2BK16ac. H2BK16ac can also be formed by ESA1. Acetylation of N-terminal lysines and particularly formation of H2BK11acK16ac has a positive effect on transcription. Post-translationally, sumoylation to form H2BK6su or H2BK7su, and probably also H2BK16su or H2BK17su, occurs preferentially near the telomeres and represses gene transcription.

It is found in the nucleus. The protein resides in the chromosome. Core component of nucleosome. Nucleosomes wrap and compact DNA into chromatin, limiting DNA accessibility to the cellular machineries which require DNA as a template. Histones thereby play a central role in transcription regulation, DNA repair, DNA replication and chromosomal stability. DNA accessibility is regulated via a complex set of post-translational modifications of histones, also called histone code, and nucleosome remodeling. This is Histone H2B (HTB1) from Ajellomyces capsulatus (Darling's disease fungus).